Here is a 1105-residue protein sequence, read N- to C-terminus: DNA polymerase delta catalytic subunit (1105 aa).

The disordered stretch occupies residues 1–46 (MSSGGRGGKRRGAPPPGPSGAAAKRAHPGGTPQPPPPAATAAAPVA). 4 residues coordinate Zn(2+): Cys1015, Cys1018, Cys1030, and Cys1033. Residues 1015–1033 (CLGCKAVISGSNQTLCFHC) form a CysA-type zinc finger. Residues Cys1062, Cys1065, Cys1075, and Cys1080 each contribute to the [4Fe-4S] cluster site. The CysB motif motif lies at 1062–1080 (CQECQGSLHQDVLCTSRDC).

The protein belongs to the DNA polymerase type-B family. As to quaternary structure, heterodimer with subunits of 125 kDa and 50 kDa. The 125 kDa subunit contains the polymerase active site and most likely the active site for the 3'-5' exonuclease activity. Requires [4Fe-4S] cluster as cofactor.

It is found in the nucleus. It carries out the reaction DNA(n) + a 2'-deoxyribonucleoside 5'-triphosphate = DNA(n+1) + diphosphate. Its function is as follows. This polymerase possesses two enzymatic activities: DNA synthesis (polymerase) and an exonucleolytic activity that degrades single-stranded DNA in the 3'- to 5'-direction. The polypeptide is DNA polymerase delta catalytic subunit (POLD1) (Oryza sativa subsp. japonica (Rice)).